Reading from the N-terminus, the 102-residue chain is MDSSKIRIRLKSYDYRMLDISAAEIVETARRTGARVCGPIPLPTKIERFTVLRSPHVDKNARDQFEQRTHKRLLDILDPNDKTVDALIKLDLAAGVDVEIKL.

This sequence belongs to the universal ribosomal protein uS10 family. In terms of assembly, part of the 30S ribosomal subunit.

Involved in the binding of tRNA to the ribosomes. In Acidithiobacillus ferrooxidans (strain ATCC 53993 / BNL-5-31) (Leptospirillum ferrooxidans (ATCC 53993)), this protein is Small ribosomal subunit protein uS10.